Consider the following 424-residue polypeptide: Ubiquitin carboxyl-terminal hydrolase 12/46 homolog (424 aa).

The 398-residue stretch at 24-421 (FGLVNFGNTC…TGYILFYQSR (398 aa)) folds into the USP domain. Cys33 acts as the Nucleophile in catalysis. Positions 131–189 (NAGPSNGNPKATNQGGSTSAMASSIASKSSSTSNSNSNSNSTTNSNGNSSNSTGSLNAN) are disordered. Residues 133-144 (GPSNGNPKATNQ) are compositionally biased toward polar residues. Over residues 145 to 189 (GGSTSAMASSIASKSSSTSNSNSNSNSTTNSNGNSSNSTGSLNAN) the composition is skewed to low complexity. Catalysis depends on His369, which acts as the Proton acceptor.

This sequence belongs to the peptidase C19 family. As to quaternary structure, catalytic component of the Usp12-46 deubiquitylase complex consisting of Usp12-46, Wdr20 and Uaf1. The Usp12-46 deubiquitylase complex associates with arr/arrow; the interaction leads to deubiquitination and stabilization of arr/arrow.

It catalyses the reaction Thiol-dependent hydrolysis of ester, thioester, amide, peptide and isopeptide bonds formed by the C-terminal Gly of ubiquitin (a 76-residue protein attached to proteins as an intracellular targeting signal).. In terms of biological role, catalytic component of the Usp12-46 deubiquitylase complex. Deubiquitylates the wg/wingless-signaling receptor arr/arrow, which stabilizes the receptor and increases its concentration at the cell surface; this enhances the sensitivity of cells to wg/wingless-signal stimulation. This increases the amplitude and spatial range of the signaling response to the wg/wingless morphogen gradient, facilitating the precise, concentration-dependent regulation of its target genes. Required for wg/wingless-mediated signaling in the wing imaginal disc and for wg/wingless-dependent regulation of adult intestinal stem cell proliferation. Negative regulator of Notch signaling, possibly by regulating lysosomal degradation of N/Notch and affecting cell surface receptor levels; this may be context and cell-type specific function involved in external sensory organ development but not in wing imaginal-disc dorsoventral boundary signaling. Protects against HTT/huntingtin-induced polyglutamine expansion-dependent neurodegeneration. The protein is Ubiquitin carboxyl-terminal hydrolase 12/46 homolog of Drosophila melanogaster (Fruit fly).